The chain runs to 254 residues: Phosphoribosylaminoimidazole-succinocarboxamide synthase (254 aa).

Belongs to the SAICAR synthetase family.

The catalysed reaction is 5-amino-1-(5-phospho-D-ribosyl)imidazole-4-carboxylate + L-aspartate + ATP = (2S)-2-[5-amino-1-(5-phospho-beta-D-ribosyl)imidazole-4-carboxamido]succinate + ADP + phosphate + 2 H(+). It functions in the pathway purine metabolism; IMP biosynthesis via de novo pathway; 5-amino-1-(5-phospho-D-ribosyl)imidazole-4-carboxamide from 5-amino-1-(5-phospho-D-ribosyl)imidazole-4-carboxylate: step 1/2. The sequence is that of Phosphoribosylaminoimidazole-succinocarboxamide synthase from Brucella melitensis biotype 2 (strain ATCC 23457).